A 186-amino-acid chain; its full sequence is ATP synthase subunit delta (186 aa).

It belongs to the ATPase delta chain family. As to quaternary structure, F-type ATPases have 2 components, F(1) - the catalytic core - and F(0) - the membrane proton channel. F(1) has five subunits: alpha(3), beta(3), gamma(1), delta(1), epsilon(1). F(0) has three main subunits: a(1), b(2) and c(10-14). The alpha and beta chains form an alternating ring which encloses part of the gamma chain. F(1) is attached to F(0) by a central stalk formed by the gamma and epsilon chains, while a peripheral stalk is formed by the delta and b chains.

The protein resides in the cell inner membrane. F(1)F(0) ATP synthase produces ATP from ADP in the presence of a proton or sodium gradient. F-type ATPases consist of two structural domains, F(1) containing the extramembraneous catalytic core and F(0) containing the membrane proton channel, linked together by a central stalk and a peripheral stalk. During catalysis, ATP synthesis in the catalytic domain of F(1) is coupled via a rotary mechanism of the central stalk subunits to proton translocation. Functionally, this protein is part of the stalk that links CF(0) to CF(1). It either transmits conformational changes from CF(0) to CF(1) or is implicated in proton conduction. This chain is ATP synthase subunit delta, found in Nitrobacter hamburgensis (strain DSM 10229 / NCIMB 13809 / X14).